Consider the following 281-residue polypeptide: Nucleotide-binding protein Tpet_1006 (281 aa).

Residue Gly9–Thr16 coordinates ATP. Asp58–Ser61 is a GTP binding site.

The protein belongs to the RapZ-like family.

Its function is as follows. Displays ATPase and GTPase activities. In Thermotoga petrophila (strain ATCC BAA-488 / DSM 13995 / JCM 10881 / RKU-1), this protein is Nucleotide-binding protein Tpet_1006.